The chain runs to 250 residues: 3-deoxy-manno-octulosonate cytidylyltransferase (250 aa).

Belongs to the KdsB family.

Its subcellular location is the cytoplasm. The catalysed reaction is 3-deoxy-alpha-D-manno-oct-2-ulosonate + CTP = CMP-3-deoxy-beta-D-manno-octulosonate + diphosphate. It participates in nucleotide-sugar biosynthesis; CMP-3-deoxy-D-manno-octulosonate biosynthesis; CMP-3-deoxy-D-manno-octulosonate from 3-deoxy-D-manno-octulosonate and CTP: step 1/1. It functions in the pathway bacterial outer membrane biogenesis; lipopolysaccharide biosynthesis. Its function is as follows. Activates KDO (a required 8-carbon sugar) for incorporation into bacterial lipopolysaccharide in Gram-negative bacteria. The polypeptide is 3-deoxy-manno-octulosonate cytidylyltransferase (Francisella tularensis subsp. novicida (strain U112)).